The sequence spans 198 residues: Probable chorismate pyruvate-lyase (198 aa).

Substrate-binding residues include arginine 73, leucine 111, and glutamate 172.

Belongs to the UbiC family.

The protein resides in the cytoplasm. The catalysed reaction is chorismate = 4-hydroxybenzoate + pyruvate. It functions in the pathway cofactor biosynthesis; ubiquinone biosynthesis. In terms of biological role, removes the pyruvyl group from chorismate, with concomitant aromatization of the ring, to provide 4-hydroxybenzoate (4HB) for the ubiquinone pathway. The protein is Probable chorismate pyruvate-lyase of Burkholderia lata (strain ATCC 17760 / DSM 23089 / LMG 22485 / NCIMB 9086 / R18194 / 383).